The sequence spans 423 residues: Cell adhesion molecule CEACAM16 (423 aa).

Positions 1–22 (MKMPLTWGSWFLLSAWILNAGA) are cleaved as a signal peptide. Asparagine 38 carries an N-linked (GlcNAc...) asparagine glycan. Residues 77-96 (ETPGPAHTGREAVRPDGSLD) form a disordered region. Residues 84–95 (TGREAVRPDGSL) are compositionally biased toward basic and acidic residues. Ig-like C2-type domains follow at residues 134–219 (PPTV…LNLT) and 224–310 (PERV…ASVV). Cysteines 155 and 202 form a disulfide. The N-linked (GlcNAc...) asparagine glycan is linked to asparagine 217. An intrachain disulfide couples cysteine 253 to cysteine 294.

The protein belongs to the immunoglobulin superfamily. CEA family. In terms of assembly, homooligomer; can for homodimers and homotetramers. Interacts with TECTA and TECTB.

The protein localises to the secreted. In terms of biological role, required for proper hearing, plays a role in maintaining the integrity of the tectorial membrane. This chain is Cell adhesion molecule CEACAM16, found in Rattus norvegicus (Rat).